Consider the following 154-residue polypeptide: 6,7-dimethyl-8-ribityllumazine synthase (154 aa).

5-amino-6-(D-ribitylamino)uracil-binding positions include Phe22, 57–59 (AYE), and 81–83 (AVI). 86–87 (GT) is a binding site for (2S)-2-hydroxy-3-oxobutyl phosphate. The active-site Proton donor is the His89. Phe114 is a 5-amino-6-(D-ribitylamino)uracil binding site. Residue Arg128 participates in (2S)-2-hydroxy-3-oxobutyl phosphate binding.

It belongs to the DMRL synthase family. In terms of assembly, forms an icosahedral capsid composed of 60 subunits, arranged as a dodecamer of pentamers.

The enzyme catalyses (2S)-2-hydroxy-3-oxobutyl phosphate + 5-amino-6-(D-ribitylamino)uracil = 6,7-dimethyl-8-(1-D-ribityl)lumazine + phosphate + 2 H2O + H(+). It functions in the pathway cofactor biosynthesis; riboflavin biosynthesis; riboflavin from 2-hydroxy-3-oxobutyl phosphate and 5-amino-6-(D-ribitylamino)uracil: step 1/2. Its function is as follows. Catalyzes the formation of 6,7-dimethyl-8-ribityllumazine by condensation of 5-amino-6-(D-ribitylamino)uracil with 3,4-dihydroxy-2-butanone 4-phosphate. This is the penultimate step in the biosynthesis of riboflavin. The sequence is that of 6,7-dimethyl-8-ribityllumazine synthase from Idiomarina loihiensis (strain ATCC BAA-735 / DSM 15497 / L2-TR).